The primary structure comprises 339 residues: Protein-glutamate methylesterase/protein-glutamine glutaminase 3 (339 aa).

Residues 2–119 (NIGIVNDLPL…GLSTDASPQA (118 aa)) form the Response regulatory domain. Residue Asp-53 is modified to 4-aspartylphosphate. One can recognise a CheB-type methylesterase domain in the interval 141-336 (PGPAPTRGQP…PQLIARIALT (196 aa)). Active-site residues include Ser-158, His-185, and Asp-278.

It belongs to the CheB family. In terms of processing, phosphorylated by CheA. Phosphorylation of the N-terminal regulatory domain activates the methylesterase activity.

Its subcellular location is the cytoplasm. It catalyses the reaction [protein]-L-glutamate 5-O-methyl ester + H2O = L-glutamyl-[protein] + methanol + H(+). It carries out the reaction L-glutaminyl-[protein] + H2O = L-glutamyl-[protein] + NH4(+). Its function is as follows. Involved in chemotaxis. Part of a chemotaxis signal transduction system that modulates chemotaxis in response to various stimuli. Catalyzes the demethylation of specific methylglutamate residues introduced into the chemoreceptors (methyl-accepting chemotaxis proteins or MCP) by CheR. Also mediates the irreversible deamidation of specific glutamine residues to glutamic acid. The polypeptide is Protein-glutamate methylesterase/protein-glutamine glutaminase 3 (Burkholderia orbicola (strain AU 1054)).